Consider the following 529-residue polypeptide: Peptide chain release factor 3 (529 aa).

Positions 11 to 280 (AKRRTFAIIS…GLVEWAPAPM (270 aa)) constitute a tr-type G domain. GTP-binding positions include 20-27 (SHPDAGKT), 88-92 (DTPGH), and 142-145 (NKLD).

It belongs to the TRAFAC class translation factor GTPase superfamily. Classic translation factor GTPase family. PrfC subfamily.

Its subcellular location is the cytoplasm. Its function is as follows. Increases the formation of ribosomal termination complexes and stimulates activities of RF-1 and RF-2. It binds guanine nucleotides and has strong preference for UGA stop codons. It may interact directly with the ribosome. The stimulation of RF-1 and RF-2 is significantly reduced by GTP and GDP, but not by GMP. This Salmonella arizonae (strain ATCC BAA-731 / CDC346-86 / RSK2980) protein is Peptide chain release factor 3.